A 208-amino-acid polypeptide reads, in one-letter code: Probable nicotinate-nucleotide adenylyltransferase (208 aa).

This sequence belongs to the NadD family.

The enzyme catalyses nicotinate beta-D-ribonucleotide + ATP + H(+) = deamido-NAD(+) + diphosphate. It functions in the pathway cofactor biosynthesis; NAD(+) biosynthesis; deamido-NAD(+) from nicotinate D-ribonucleotide: step 1/1. Its function is as follows. Catalyzes the reversible adenylation of nicotinate mononucleotide (NaMN) to nicotinic acid adenine dinucleotide (NaAD). This is Probable nicotinate-nucleotide adenylyltransferase from Trichormus variabilis (strain ATCC 29413 / PCC 7937) (Anabaena variabilis).